The sequence spans 397 residues: LL-diaminopimelate aminotransferase (397 aa).

Tyr-14 and Gly-41 together coordinate substrate. Pyridoxal 5'-phosphate-binding positions include Tyr-71, 104 to 105 (AK), Tyr-128, Asn-174, Tyr-205, and 233 to 235 (SFS). Lys-105, Tyr-128, and Asn-174 together coordinate substrate. Lys-236 is subject to N6-(pyridoxal phosphate)lysine. The pyridoxal 5'-phosphate site is built by Arg-244 and Asn-275. Residues Asn-275 and Arg-368 each coordinate substrate.

It belongs to the class-I pyridoxal-phosphate-dependent aminotransferase family. LL-diaminopimelate aminotransferase subfamily. In terms of assembly, homodimer. It depends on pyridoxal 5'-phosphate as a cofactor.

The catalysed reaction is (2S,6S)-2,6-diaminopimelate + 2-oxoglutarate = (S)-2,3,4,5-tetrahydrodipicolinate + L-glutamate + H2O + H(+). It participates in amino-acid biosynthesis; L-lysine biosynthesis via DAP pathway; LL-2,6-diaminopimelate from (S)-tetrahydrodipicolinate (aminotransferase route): step 1/1. In terms of biological role, involved in the synthesis of meso-diaminopimelate (m-DAP or DL-DAP), required for both lysine and peptidoglycan biosynthesis. Catalyzes the direct conversion of tetrahydrodipicolinate to LL-diaminopimelate. In Chlamydia pneumoniae (Chlamydophila pneumoniae), this protein is LL-diaminopimelate aminotransferase.